A 301-amino-acid chain; its full sequence is Glycine--tRNA ligase alpha subunit (301 aa).

The protein belongs to the class-II aminoacyl-tRNA synthetase family. Tetramer of two alpha and two beta subunits.

Its subcellular location is the cytoplasm. The catalysed reaction is tRNA(Gly) + glycine + ATP = glycyl-tRNA(Gly) + AMP + diphosphate. The protein is Glycine--tRNA ligase alpha subunit of Campylobacter hominis (strain ATCC BAA-381 / DSM 21671 / CCUG 45161 / LMG 19568 / NCTC 13146 / CH001A).